Consider the following 187-residue polypeptide: Ribosome-recycling factor (187 aa).

The protein belongs to the RRF family.

Its subcellular location is the cytoplasm. In terms of biological role, responsible for the release of ribosomes from messenger RNA at the termination of protein biosynthesis. May increase the efficiency of translation by recycling ribosomes from one round of translation to another. The chain is Ribosome-recycling factor from Methylorubrum populi (strain ATCC BAA-705 / NCIMB 13946 / BJ001) (Methylobacterium populi).